The primary structure comprises 273 residues: Putative phosphoenolpyruvate synthase regulatory protein (273 aa).

153-160 provides a ligand contact to ADP; it reads GVSRSGKT.

It belongs to the pyruvate, phosphate/water dikinase regulatory protein family. PSRP subfamily.

The catalysed reaction is [pyruvate, water dikinase] + ADP = [pyruvate, water dikinase]-phosphate + AMP + H(+). It carries out the reaction [pyruvate, water dikinase]-phosphate + phosphate + H(+) = [pyruvate, water dikinase] + diphosphate. In terms of biological role, bifunctional serine/threonine kinase and phosphorylase involved in the regulation of the phosphoenolpyruvate synthase (PEPS) by catalyzing its phosphorylation/dephosphorylation. The sequence is that of Putative phosphoenolpyruvate synthase regulatory protein from Variovorax paradoxus (strain S110).